The sequence spans 467 residues: Constitutive acid phosphatase (467 aa).

An N-terminal signal peptide occupies residues 1–17 (MFKSVVYSVLAAALVNA). His75 (nucleophile) is an active-site residue. Asn97, Asn103, Asn162, Asn192, Asn250, and Asn315 each carry an N-linked (GlcNAc...) asparagine glycan. Catalysis depends on Asp338, which acts as the Proton donor. N-linked (GlcNAc...) asparagine glycans are attached at residues Asn356, Asn390, Asn439, Asn445, Asn456, and Asn461.

The protein belongs to the histidine acid phosphatase family.

It carries out the reaction a phosphate monoester + H2O = an alcohol + phosphate. This Saccharomyces cerevisiae (strain ATCC 204508 / S288c) (Baker's yeast) protein is Constitutive acid phosphatase (PHO3).